A 400-amino-acid chain; its full sequence is Tryptophan--tRNA ligase (400 aa).

The 'HIGH' region motif lies at 12–20; that stretch reads PTGALHLGH. Positions 173–241 are insert; that stretch reads REPGFEQKAL…RLFGYLEGAR (69 aa). A 'KMSKS' region motif is present at residues 265–269; it reads KMSKS. An ATP-binding site is contributed by lysine 268. A disordered region spans residues 280 to 305; it reads KASVEKKVRTMPTDPARVRRTDPGDP. The segment covering 295–304 has biased composition (basic and acidic residues); the sequence is ARVRRTDPGD.

This sequence belongs to the class-I aminoacyl-tRNA synthetase family. As to quaternary structure, homodimer.

The protein resides in the cytoplasm. The catalysed reaction is tRNA(Trp) + L-tryptophan + ATP = L-tryptophyl-tRNA(Trp) + AMP + diphosphate + H(+). The protein is Tryptophan--tRNA ligase (trpS) of Ralstonia nicotianae (strain ATCC BAA-1114 / GMI1000) (Ralstonia solanacearum).